The following is a 257-amino-acid chain: Transcriptional regulatory protein TrcR (257 aa).

Residues 33 to 147 (RVLLVDDEPA…ELVARLRGLL (115 aa)) enclose the Response regulatory domain. 4-aspartylphosphate is present on D82. Positions 158–255 (DEALRVGDLT…VRGIGYMLRP (98 aa)) form a DNA-binding region, ompR/PhoB-type.

Post-translationally, phosphorylated by TrcS.

Functionally, member of the two-component regulatory system TrcS/TrcR. Activates its own expression by binding specifically to the AT-rich sequence of the trcR promoter region. Also negatively regulates the expression of Rv1057 by binding to an AT-rich sequences within the Rv1057 upstream sequence. The TrcR-TrcS regulatory system may act as a transition regulatory system involved in adapting to an intracellular environment and transitioning from latency to reactivation. The sequence is that of Transcriptional regulatory protein TrcR from Mycobacterium tuberculosis (strain ATCC 25618 / H37Rv).